Reading from the N-terminus, the 201-residue chain is Recombination protein RecR (201 aa).

The C4-type zinc-finger motif lies at 60–75; sequence CKYCQSLTEKDVCDIC. The Toprim domain maps to 83 to 177; the sequence is SKLCIIESML…KISRIGFGVP (95 aa).

This sequence belongs to the RecR family.

May play a role in DNA repair. It seems to be involved in an RecBC-independent recombinational process of DNA repair. It may act with RecF and RecO. This chain is Recombination protein RecR, found in Francisella philomiragia subsp. philomiragia (strain ATCC 25017 / CCUG 19701 / FSC 153 / O#319-036).